The primary structure comprises 322 residues: Probable manganese-dependent inorganic pyrophosphatase (322 aa).

Positions 10, 14, 16, 86, 108, and 160 each coordinate Mn(2+).

It belongs to the PPase class C family. Mn(2+) serves as cofactor.

It localises to the cytoplasm. It catalyses the reaction diphosphate + H2O = 2 phosphate + H(+). This is Probable manganese-dependent inorganic pyrophosphatase (ppaC) from Archaeoglobus fulgidus (strain ATCC 49558 / DSM 4304 / JCM 9628 / NBRC 100126 / VC-16).